The chain runs to 256 residues: Thyroid transcription factor 1-associated protein 26 homolog (256 aa).

Disordered regions lie at residues 1–35 and 72–190; these read MAPF…AKRK and RKER…KQEY. The span at 89-104 shows a compositional bias: basic and acidic residues; the sequence is YPEHLKHLYLAERERL. A compositionally biased stretch (polar residues) spans 136 to 185; it reads LGSSSSEKNITNTSTDQTIAPASSNEPAQPESSHKTTFFQRKQNISSYQK.

This sequence belongs to the TAP26 family.

The protein is Thyroid transcription factor 1-associated protein 26 homolog (ccdc59) of Danio rerio (Zebrafish).